Reading from the N-terminus, the 99-residue chain is Plastocyanin (99 aa).

The Plastocyanin-like domain maps to 1 to 99 (IEVLLGSDDG…AGMVGKVTVN (99 aa)). Residues histidine 37, cysteine 84, histidine 87, and methionine 92 each contribute to the Cu cation site.

Belongs to the plastocyanin family. Requires Cu(2+) as cofactor.

The protein localises to the plastid. The protein resides in the chloroplast thylakoid membrane. Participates in electron transfer between P700 and the cytochrome b6-f complex in photosystem I. The polypeptide is Plastocyanin (PETE) (Solanum crispum (Chilean potato-tree)).